A 359-amino-acid chain; its full sequence is Peptide chain release factor 1 (359 aa).

Gln236 carries the post-translational modification N5-methylglutamine. The tract at residues 286-305 (KKEMERSTMRKSQIGSGDRS) is disordered.

The protein belongs to the prokaryotic/mitochondrial release factor family. Methylated by PrmC. Methylation increases the termination efficiency of RF1.

It is found in the cytoplasm. Functionally, peptide chain release factor 1 directs the termination of translation in response to the peptide chain termination codons UAG and UAA. In Wolbachia pipientis wMel, this protein is Peptide chain release factor 1.